A 906-amino-acid polypeptide reads, in one-letter code: Inter-alpha-trypsin inhibitor heavy chain H1 (906 aa).

The first 22 residues, 1–22 (MGLRGLLCVCLVSLLALQAVAA), serve as a signal peptide directing secretion. Residues 23-29 (QGSPTRN) constitute a propeptide that is removed on maturation. Residues 32 to 161 (GGKKRMAVDA…KATFRLTYEE (130 aa)) enclose the VIT domain. The S-linked (Hex...) cysteine glycan is linked to cysteine 55. Serine 124 carries the post-translational modification Phosphoserine. The region spanning 287 to 470 (NVVFVIDISS…QQLQGFYEQV (184 aa)) is the VWFA domain. Threonine 397 and threonine 402 each carry phosphothreonine. N-linked (GlcNAc...) asparagine glycosylation occurs at asparagine 583. Serine 643 carries an O-linked (GalNAc...) serine glycan. Threonine 648 is a glycosylation site (O-linked (GalNAc...) threonine). Position 667 is an aspartate 1-(chondroitin 4-sulfate)-ester (aspartate 667). A propeptide spanning residues 668-906 (PHFLIHVPQK…HTDYIVPDIF (239 aa)) is cleaved from the precursor. Asparagine 745 carries an N-linked (GlcNAc...) asparagine glycan.

This sequence belongs to the ITIH family. In terms of assembly, I-alpha-I plasma protease inhibitors are assembled from one or two heavy chains (HC) and one light chain, bikunin. Inter-alpha-inhibitor (I-alpha-I) is composed of ITIH1/HC1, ITIH2/HC2 and bikunin. Interacts with TNFAIP6 (via Link and CUB domains). Heavy chains are linked to bikunin via chondroitin 4-sulfate esterified to the alpha-carboxyl of the C-terminal aspartate after propeptide cleavage. In terms of processing, the S-linked glycan is composed of two 6-carbon sugars, possibly Glc or Gal.

Its subcellular location is the secreted. Functionally, may act as a carrier of hyaluronan in serum or as a binding protein between hyaluronan and other matrix protein, including those on cell surfaces in tissues to regulate the localization, synthesis and degradation of hyaluronan which are essential to cells undergoing biological processes. This is Inter-alpha-trypsin inhibitor heavy chain H1 (ITIH1) from Bos taurus (Bovine).